Here is a 354-residue protein sequence, read N- to C-terminus: 3-isopropylmalate dehydrogenase (354 aa).

76-87 (GPRWDGAKERPE) is an NAD(+) binding site. Residues arginine 94, arginine 104, arginine 130, and aspartate 215 each coordinate substrate. Mg(2+) is bound by residues aspartate 215, aspartate 239, and aspartate 243. Residue 273–285 (GSAPDIAGKNKAN) coordinates NAD(+).

The protein belongs to the isocitrate and isopropylmalate dehydrogenases family. LeuB type 1 subfamily. Homodimer. Mg(2+) is required as a cofactor. It depends on Mn(2+) as a cofactor.

The protein resides in the cytoplasm. The catalysed reaction is (2R,3S)-3-isopropylmalate + NAD(+) = 4-methyl-2-oxopentanoate + CO2 + NADH. It participates in amino-acid biosynthesis; L-leucine biosynthesis; L-leucine from 3-methyl-2-oxobutanoate: step 3/4. In terms of biological role, catalyzes the oxidation of 3-carboxy-2-hydroxy-4-methylpentanoate (3-isopropylmalate) to 3-carboxy-4-methyl-2-oxopentanoate. The product decarboxylates to 4-methyl-2 oxopentanoate. The protein is 3-isopropylmalate dehydrogenase of Bacillus cereus (strain ZK / E33L).